Here is a 208-residue protein sequence, read N- to C-terminus: Germin-like protein subfamily 3 member 1 (208 aa).

An N-terminal signal peptide occupies residues 1–18 (MLRTIFLLSLLFALSNAS). The cysteines at positions 23 and 38 are disulfide-linked. Residues 52–198 (SGLGTPGNTT…TTFLDATTVK (147 aa)) form the Cupin type-1 domain. N-linked (GlcNAc...) asparagine glycosylation occurs at asparagine 59. Histidine 100, histidine 102, glutamate 107, and histidine 146 together coordinate Mn(2+).

The protein belongs to the germin family. May not form oligomer. As to expression, expressed during germination, and also in green shoots, etiolated seedlings and whole seedlings.

The protein localises to the secreted. Its subcellular location is the extracellular space. It is found in the apoplast. Functionally, may play a role in plant defense. Probably has no oxalate oxidase activity even if the active site is conserved. The polypeptide is Germin-like protein subfamily 3 member 1 (GLP1) (Arabidopsis thaliana (Mouse-ear cress)).